The following is a 1336-amino-acid chain: Adhesion G protein-coupled receptor A2 (1336 aa).

A signal peptide spans 1-33; that stretch reads MGAGGRRMPVPPARLLLLPLLPCLLLLAPGTRG. Over 34 to 769 the chain is Extracellular; the sequence is APGCPVPIRG…AGGSGAGLHP (736 aa). Residues Asn-84 and Asn-101 are each glycosylated (N-linked (GlcNAc...) asparagine). 4 LRR repeats span residues 85–106, 109–130, 133–154, and 157–178; these read GTITLLLSNNKITGLRNGSFLG, LLEKLDLRSNVISTVQPGAFLG, ELKRLDLSNNRIGCLTSETFQG, and RLLRLNISGNIYSSLQPGVFDE. N-linked (GlcNAc...) asparagine glycosylation occurs at Asn-162. An LRRCT domain is found at 190–241; the sequence is EFLTCDCRLRWLLPWARNHSLQLSERTLCAYPSALHAHALSSLQESQLRCEG. An Ig-like domain is found at 247–344; the sequence is THYLIPSLRQ…GNTSKKVEIV (98 aa). A disulfide bond links Cys-268 and Cys-328. Asn-275 carries an N-linked (GlcNAc...) asparagine glycan. The short motif at 362–364 is the RGD element; the sequence is RGD. The GAIN-B domain maps to 594–757; sequence FRCTTGRPNI…AVLMELNAFP (164 aa). Residues Asn-602, Asn-691, and Asn-735 are each glycosylated (N-linked (GlcNAc...) asparagine). Residues 711–757 are GPS; the sequence is AAWWNQDGPGGWSSEGCRLRYSQPNVSSLYCQHLGNVAVLMELNAFP. Cys-727 and Cys-741 are joined by a disulfide. Residues 770-790 form a helical membrane-spanning segment; it reads VVYPCTALLLLCLFSTIITYI. The Cytoplasmic portion of the chain corresponds to 791-805; sequence LNHSSIHVSRKGWHM. Residues 806-826 form a helical membrane-spanning segment; that stretch reads LLNLCFHMAMTSAVFVGGVTL. Residues 827 to 830 are Extracellular-facing; it reads TNYQ. Residues 831–851 traverse the membrane as a helical segment; sequence MVCQAVGITLHYSSLSSLLWM. The Cytoplasmic portion of the chain corresponds to 852-884; that stretch reads GVKARVLHKELSWRAPPLEEGEAAPPGPRPMLR. The helical transmembrane segment at 885-905 threads the bilayer; that stretch reads FYLIAGGIPLIICGITAAVNI. At 906-922 the chain is on the extracellular side; sequence HNYRDHSPYCWLVWRPS. Residues 923–943 form a helical membrane-spanning segment; that stretch reads LGAFYIPVALILPITWIYFLC. Residues 944-1016 are Cytoplasmic-facing; sequence AGLHLRSHVA…DGVYSPGVQL (73 aa). Residues 1017–1037 form a helical membrane-spanning segment; that stretch reads GALMTTHFLYLAMWACGALAV. Over 1038–1044 the chain is Extracellular; it reads SQRWLPR. Residues 1045–1065 traverse the membrane as a helical segment; the sequence is VVCSCLYGVAASALGLFVFTH. The Cytoplasmic portion of the chain corresponds to 1066-1336; sequence HCARRRDVRA…TGLWKSETTV (271 aa). Positions 1084 to 1095 are enriched in low complexity; it reads ASPSASHVPARA. Residues 1084 to 1310 form a disordered region; that stretch reads ASPSASHVPA…NGAPKGGKYE (227 aa). Ser-1104 is subject to Phosphoserine. Positions 1110 to 1124 are enriched in low complexity; it reads GPASLKSSPSGSSGR. Over residues 1133 to 1143 the composition is skewed to polar residues; it reads TNLQVAQSQVC. Residues 1166–1186 are compositionally biased toward basic residues; it reads PRHHNNLHHGRRVHKSRAKGH. Over residues 1213–1234 the composition is skewed to polar residues; it reads SSESGSLHNSPSDSYPGSSRNS. The short motif at 1333–1336 is the PDZ-binding element; it reads ETTV.

The protein belongs to the G-protein coupled receptor 2 family. Adhesion G-protein coupled receptor (ADGR) subfamily. In terms of assembly, interacts with RECK; the interaction is direct. Interacts (via PDZ-binding motif) with DLG1 (via PDZ domains). The cleaved extracellular subunit interacts with the integrin heterodimer ITGAV:ITGB3. Post-translationally, glycosylated. Proteolytically cleaved into two subunits, an extracellular subunit and a seven-transmembrane subunit. Cleaved by thrombin (F2) and MMP1. Also cleaved by MMP9, with lower efficiency. Presence of the protein disulfide-isomerase P4HB at the cell surface is additionally required for shedding of the extracellular subunit, suggesting that the subunits are linked by disulfide bonds. Shedding is enhanced by the growth factor FGF2 and may promote cell survival during angiogenesis. As to expression, abundantly expressed in the vasculature of the developing embryo. Expression in normal adult tissues is specifically vascular with endothelial expression in CNS, including brain and retina and more widespread pericyte expression in the brain and organs, including the kidney, pancreas and corpus luteum.

Its subcellular location is the cell membrane. It is found in the cell projection. It localises to the filopodium. Endothelial receptor which functions together with RECK to enable brain endothelial cells to selectively respond to Wnt7 signals (WNT7A or WNT7B). Plays a key role in Wnt7-specific responses, such as endothelial cell sprouting and migration in the forebrain and neural tube, and establishment of the blood-brain barrier. Acts as a Wnt7-specific coactivator of canonical Wnt signaling: required to deliver RECK-bound Wnt7 to frizzled by assembling a higher-order RECK-ADGRA2-Fzd-LRP5-LRP6 complex. ADGRA2-tethering function does not rely on its G-protein coupled receptor (GPCR) structure but instead on its combined capacity to interact with RECK extracellularly and recruit the Dishevelled scaffolding protein intracellularly. Binds to the glycosaminoglycans heparin, heparin sulfate, chondroitin sulfate and dermatan sulfate. In Mus musculus (Mouse), this protein is Adhesion G protein-coupled receptor A2.